We begin with the raw amino-acid sequence, 78 residues long: Pro-glucagon (78 aa).

It belongs to the glucagon family.

The protein localises to the secreted. In terms of biological role, plays a key role in glucose metabolism and homeostasis. Regulates blood glucose by increasing gluconeogenesis and decreasing glycolysis. The sequence is that of Pro-glucagon (gcg) from Atractosteus spatula (Alligator gar).